Here is a 301-residue protein sequence, read N- to C-terminus: Ethylmalonyl-CoA decarboxylase (301 aa).

N6-acetyllysine; alternate is present on lysine 211. Lysine 211 bears the N6-succinyllysine; alternate mark. At lysine 295 the chain carries N6-succinyllysine.

This sequence belongs to the enoyl-CoA hydratase/isomerase family.

Its subcellular location is the cytoplasm. The protein resides in the cytosol. The enzyme catalyses (2S)-ethylmalonyl-CoA + H(+) = butanoyl-CoA + CO2. It catalyses the reaction (S)-methylmalonyl-CoA + H(+) = propanoyl-CoA + CO2. The catalysed reaction is (2R)-ethylmalonyl-CoA + H(+) = butanoyl-CoA + CO2. Its function is as follows. Decarboxylates ethylmalonyl-CoA, a potentially toxic metabolite, to form butyryl-CoA, suggesting it might be involved in metabolite proofreading. Acts preferentially on (S)-ethylmalonyl-CoA but also has some activity on the (R)-isomer. Also has methylmalonyl-CoA decarboxylase activity at lower level. This chain is Ethylmalonyl-CoA decarboxylase (ECHDC1), found in Pongo abelii (Sumatran orangutan).